The sequence spans 59 residues: Large ribosomal subunit protein bL35 (59 aa).

Disordered regions lie at residues 1-22 (MKVK…IKRK) and 30-49 (APHK…TVSA). The segment covering 30–43 (APHKTTKQKRHLRK) has biased composition (basic residues).

Belongs to the bacterial ribosomal protein bL35 family.

This Mycoplasma pneumoniae (strain ATCC 29342 / M129 / Subtype 1) (Mycoplasmoides pneumoniae) protein is Large ribosomal subunit protein bL35 (rpmI).